A 220-amino-acid polypeptide reads, in one-letter code: Iron-sulfur cluster repair protein YtfE (220 aa).

The protein belongs to the RIC family. YtfE subfamily. In terms of assembly, homodimer.

The protein resides in the cytoplasm. Functionally, di-iron-containing protein involved in the repair of iron-sulfur clusters damaged by oxidative and nitrosative stress conditions. The sequence is that of Iron-sulfur cluster repair protein YtfE from Escherichia coli O81 (strain ED1a).